Here is a 296-residue protein sequence, read N- to C-terminus: Protoheme IX farnesyltransferase (296 aa).

Helical transmembrane passes span 13-33, 35-55, 84-104, 107-127, 132-152, 162-182, 208-228, 229-249, and 264-284; these read IIFG…KGII, YPLF…GCVF, VTLI…YIAA, LAMW…SLYM, VYGT…GYCA, LILL…IAIF, ITLY…VGYA, GYKY…MALR, and FVFS…DFSV.

This sequence belongs to the UbiA prenyltransferase family. Protoheme IX farnesyltransferase subfamily.

It is found in the cell inner membrane. The enzyme catalyses heme b + (2E,6E)-farnesyl diphosphate + H2O = Fe(II)-heme o + diphosphate. The protein operates within porphyrin-containing compound metabolism; heme O biosynthesis; heme O from protoheme: step 1/1. Its function is as follows. Converts heme B (protoheme IX) to heme O by substitution of the vinyl group on carbon 2 of heme B porphyrin ring with a hydroxyethyl farnesyl side group. The protein is Protoheme IX farnesyltransferase of Edwardsiella ictaluri (strain 93-146).